A 382-amino-acid chain; its full sequence is Pyruvate dehydrogenase E1 component subunit beta, mitochondrial (382 aa).

Residues 1–46 (MSRFLRPAFRLATTATRASTIRPTPSSLITKAAAVPTTRLLQKRSY) constitute a mitochondrion transit peptide. Glu-112 is a thiamine diphosphate binding site. Residues Ile-165, Ala-213, Ile-214, Asp-216, and Asn-218 each contribute to the K(+) site.

As to quaternary structure, eukaryotic pyruvate dehydrogenase (PDH) complexes are organized as a core consisting of the oligomeric dihydrolipoamide acetyl-transferase (E2), around which are arranged multiple copies of pyruvate dehydrogenase (E1), dihydrolipoamide dehydrogenase (E3) and protein X (E3BP) bound by non-covalent bonds. The Chaetomium thermophilum PDH complex contains 60 E2 units, 12 E3BP units, about 20 E1 units, and 12 or more E3 units. The units are organized in 1 E2 60-mer, 4 E3BP trimers, about 20 E1 tetramers, and a maximum of 12 E3 dimers. Pyruvate dehydrogenase (E1) is active as a tetramer of 2 alpha and 2 beta subunits. The E3BP trimers are bound inside the icosahedral core with tetrahedral symmetry. The cofactor is thiamine diphosphate.

It localises to the mitochondrion. It catalyses the reaction N(6)-[(R)-lipoyl]-L-lysyl-[protein] + pyruvate + H(+) = N(6)-[(R)-S(8)-acetyldihydrolipoyl]-L-lysyl-[protein] + CO2. Functionally, the 10-megadalton pyruvate dehydrogenase complex contains multiple copies of three enzymatic components: pyruvate dehydrogenase (E1), dihydrolipoamide acetyltransferase (E2) and lipoamide dehydrogenase (E3) and catalyzes the overall oxidative decarboxylation of pyruvate to form acetyl-CoA and CO(2). Within the complex, pyruvate and thiamine pyrophosphate (TPP or vitamin B1) are bound by pyruvate dehydrogenase E1 subunits alpha and beta and pyruvate is decarboxylated leading to the 2-carbon hydrohyethyl bound to TPP. The E2 component contains covalently-bound lipoyl cofactors and transfers the hydroxyethyl group from TPP to an oxidized form of covalently bound lipoamide, and the resulting acetyl group is then transferred to free coenzyme A to form acetyl-CoA and reduced dihydrolipoamide-E2. Finally, the flavoprotein dihydrolipoamide dehydrogenase (E3) re-oxidizes the lipoyl group of dihydrolipoamide-E2 to form lipoamide-E2 and NADH. A fourth subunit, E3BP, is responsible for tethering E3 in proximity to the core, forming the entire metabolon. This chain is Pyruvate dehydrogenase E1 component subunit beta, mitochondrial, found in Chaetomium thermophilum (strain DSM 1495 / CBS 144.50 / IMI 039719) (Thermochaetoides thermophila).